An 88-amino-acid polypeptide reads, in one-letter code: Small ribosomal subunit protein bS20 (88 aa).

Belongs to the bacterial ribosomal protein bS20 family.

Its function is as follows. Binds directly to 16S ribosomal RNA. This chain is Small ribosomal subunit protein bS20, found in Bradyrhizobium diazoefficiens (strain JCM 10833 / BCRC 13528 / IAM 13628 / NBRC 14792 / USDA 110).